Reading from the N-terminus, the 310-residue chain is L-lactate dehydrogenase (310 aa).

NAD(+)-binding positions include Val17, Asp38, Lys43, Tyr69, and 83-84 (GA). Gln86 and Arg92 together coordinate substrate. Residues Ser105, 122–124 (ATN), and Ser147 each bind NAD(+). 124–127 (NPVD) contributes to the substrate binding site. 152 to 155 (DTAR) serves as a coordination point for substrate. Residues Arg157 and His172 each coordinate beta-D-fructose 1,6-bisphosphate. The active-site Proton acceptor is the His179. Residue Tyr218 is modified to Phosphotyrosine. Thr227 serves as a coordination point for substrate.

Belongs to the LDH/MDH superfamily. LDH family. Homotetramer.

It localises to the cytoplasm. The catalysed reaction is (S)-lactate + NAD(+) = pyruvate + NADH + H(+). Its pathway is fermentation; pyruvate fermentation to lactate; (S)-lactate from pyruvate: step 1/1. With respect to regulation, allosterically activated by fructose 1,6-bisphosphate (FBP). Functionally, catalyzes the conversion of lactate to pyruvate. In Halalkalibacterium halodurans (strain ATCC BAA-125 / DSM 18197 / FERM 7344 / JCM 9153 / C-125) (Bacillus halodurans), this protein is L-lactate dehydrogenase.